A 94-amino-acid polypeptide reads, in one-letter code: Small ribosomal subunit protein uS19 (94 aa).

It belongs to the universal ribosomal protein uS19 family.

In terms of biological role, protein S19 forms a complex with S13 that binds strongly to the 16S ribosomal RNA. In Hamiltonella defensa subsp. Acyrthosiphon pisum (strain 5AT), this protein is Small ribosomal subunit protein uS19.